A 90-amino-acid polypeptide reads, in one-letter code: Acylphosphatase (90 aa).

An Acylphosphatase-like domain is found at glycine 5–cysteine 90. Residues arginine 20 and asparagine 38 contribute to the active site.

Belongs to the acylphosphatase family.

It carries out the reaction an acyl phosphate + H2O = a carboxylate + phosphate + H(+). This chain is Acylphosphatase (acyP), found in Psychromonas ingrahamii (strain DSM 17664 / CCUG 51855 / 37).